Reading from the N-terminus, the 485-residue chain is Argininosuccinate lyase (485 aa).

The protein belongs to the lyase 1 family. Argininosuccinate lyase subfamily.

The protein resides in the cytoplasm. The enzyme catalyses 2-(N(omega)-L-arginino)succinate = fumarate + L-arginine. The protein operates within amino-acid biosynthesis; L-arginine biosynthesis; L-arginine from L-ornithine and carbamoyl phosphate: step 3/3. This chain is Argininosuccinate lyase, found in Halobacterium salinarum (strain ATCC 29341 / DSM 671 / R1).